Reading from the N-terminus, the 484-residue chain is MAAPILFWHRRDLRLSDNIGLAAARAQSAQLIGLFCLDPQILQSADMAPARVAYLQGCLQELQQRYQQAGSRLLLLQGDPQHLIPQLAQQLQAEAVYWNQDIEPYGRDRDGQVAAALKTAGIRAVQLWDQLLHSPDQILSGSGNPYSVYGPFWKNWQAQPKPTPVATPTELVDLSPEQLTAIAPLLLSELPTLKQLGFDWDGGFPVEPGETAAIARLQEFCDRAIADYDPQRNFPAEAGTSGLSPALKFGAIGIRQAWRAASAAHALSRSDEARNSIRVWQQELAWREFYQHALYHFPSLADGPYRSLWQQFPWENREALFTAWTQAQTGYPIVDAAMRQLTETGWMHNRCWMIVASFLTKDLIIDWRRGEQFFMQHLVDGDLAANNGGWQWSASSGMDPKPLRIFNPASQAKKFDATATYIKRWLPELRHVHPKDLISGEITPIGRRGYPAPIVNHNLRQKQFKALYNQLKAAIAEPEAEPDS.

Positions 3-132 constitute a Photolyase/cryptochrome alpha/beta domain; sequence APILFWHRRD…RAVQLWDQLL (130 aa). Coenzyme F420-(gamma-Glu)n-binding positions include 36 to 38, R51, and 101 to 109; these read CLD and DIEPYGRDR. Residues 141-148 are DNA-binding; it reads GSGNPYSV. Y228 is an FAD binding site. R232 contacts DNA. An FAD-binding site is contributed by 240-247; that stretch reads TSGLSPAL. K248 lines the coenzyme F420-(gamma-Glu)n pocket. 2 interaction with DNA regions span residues 283 to 290 and 349 to 350; these read ELAWREFY and NR. Residues 346–352, 380–382, and N386 each bind FAD; these read WMHNRCW and DGD. DNA-binding residues include Q411 and K472.

Belongs to the DNA photolyase class-1 family. As to quaternary structure, monomer. FAD serves as cofactor. The cofactor is coenzyme F420-(gamma-Glu)n.

It catalyses the reaction cyclobutadipyrimidine (in DNA) = 2 pyrimidine residues (in DNA).. Its function is as follows. Involved in repair of UV radiation-induced DNA damage. Catalyzes the light-dependent monomerization (300-600 nm) of cyclobutyl pyrimidine dimers (in cis-syn configuration), which are formed between adjacent bases on the same DNA strand upon exposure to ultraviolet radiation. This is Deoxyribodipyrimidine photo-lyase (phr) from Synechococcus sp. (strain ATCC 27144 / PCC 6301 / SAUG 1402/1) (Anacystis nidulans).